Here is a 210-residue protein sequence, read N- to C-terminus: Pre-mRNA-splicing factor 38 (210 aa).

The tract at residues 181-210 (PLSSSSDEEDDDEEQISKLESNEGAVDRNI) is disordered. The segment covering 195–210 (QISKLESNEGAVDRNI) has biased composition (basic and acidic residues).

This sequence belongs to the PRP38 family. As to quaternary structure, component of the 25S U4/U6.U5 tri-snRNP particle, a subcomplex of the spliceosome.

The protein localises to the nucleus. Functionally, required for pre-mRNA splicing and maintenance of stable U6 small nuclear RNA levels. Implicated in the formation of stable and biologically active snRNP structures. As part of the U4/U6.U5 tri-snRNP particle, dispensible for spliceosome assembly, but required for conformational changes, which result in U4 snRNA release and the subsequent catalytic activation of the spliceosome. In Schizosaccharomyces pombe (strain 972 / ATCC 24843) (Fission yeast), this protein is Pre-mRNA-splicing factor 38.